The following is a 162-amino-acid chain: Phosphopantetheine adenylyltransferase (162 aa).

Substrate is bound at residue Ser-9. ATP-binding positions include 9-10 (SF) and His-17. The substrate site is built by Lys-41, Leu-73, and Lys-87. ATP is bound by residues 88 to 90 (GLR), Glu-98, and 123 to 129 (CSFLSSS).

The protein belongs to the bacterial CoaD family. As to quaternary structure, homohexamer. Mg(2+) is required as a cofactor.

It is found in the cytoplasm. It carries out the reaction (R)-4'-phosphopantetheine + ATP + H(+) = 3'-dephospho-CoA + diphosphate. The protein operates within cofactor biosynthesis; coenzyme A biosynthesis; CoA from (R)-pantothenate: step 4/5. Its function is as follows. Reversibly transfers an adenylyl group from ATP to 4'-phosphopantetheine, yielding dephospho-CoA (dPCoA) and pyrophosphate. This chain is Phosphopantetheine adenylyltransferase, found in Natranaerobius thermophilus (strain ATCC BAA-1301 / DSM 18059 / JW/NM-WN-LF).